A 147-amino-acid polypeptide reads, in one-letter code: Transcriptional regulator MraZ (147 aa).

2 consecutive SpoVT-AbrB domains span residues 6–48 (NFER…NSEE) and 77–120 (TVEV…SKAK).

Belongs to the MraZ family. Forms oligomers.

The protein resides in the cytoplasm. It localises to the nucleoid. This is Transcriptional regulator MraZ from Mycoplasmopsis pulmonis (strain UAB CTIP) (Mycoplasma pulmonis).